A 1052-amino-acid polypeptide reads, in one-letter code: RTX-III toxin determinant A from serotype 8 (1052 aa).

A run of 3 helical transmembrane segments spans residues 248-265, 275-334, and 372-418; these read GLDI…SFAL, KVAA…LRVA, and DASI…GILE. Hemolysin-type calcium-binding repeat units follow at residues 744 to 761, 762 to 779, 780 to 797, 798 to 815, 826 to 843, and 844 to 861; these read KGSK…DDLL, NGND…NDEL, RGDN…NDKL, LGGN…NDEL, RGGK…SDLL, and DGGE…SDFY.

Belongs to the RTX prokaryotic toxin (TC 1.C.11) family. In terms of processing, palmitoylated by ApxIIIC. The toxin only becomes active when modified.

It localises to the secreted. It is found in the host cell membrane. Its function is as follows. Does not have hemolytic activity but shows a strong cytotoxicity towards alveolar macrophages and neutrophils. This chain is RTX-III toxin determinant A from serotype 8 (apxIIIA), found in Actinobacillus pleuropneumoniae (Haemophilus pleuropneumoniae).